A 1755-amino-acid polypeptide reads, in one-letter code: Transposon Ty1-GR3 Gag-Pol polyprotein (1755 aa).

3 stretches are compositionally biased toward polar residues: residues 1 to 10 (MESQQLSNYP), 48 to 60 (TKAN…TPAS), and 127 to 152 (QSQF…GNTF). 3 disordered regions span residues 1-93 (MESQ…MMTQ), 126-173 (PQSQ…RPPP), and 352-421 (GSRN…SKST). Residues 153 to 165 (TDSSSADSDMTST) are compositionally biased toward low complexity. Positions 299–401 (NNGIHINNKV…NSKSKTARAH (103 aa)) are RNA-binding. Low complexity predominate over residues 402 to 418 (NVSTSNNSPSTDNDSIS). Ser-416 is modified (phosphoserine). The For protease activity; shared with dimeric partner role is filled by Asp-461. The integrase-type zinc finger-like stretch occupies residues 583–640 (NVHTSESTRKYPYPFIHRMLAHANAQTIRYSLKNNTITYFNESDVDWSSAIDYQCPDC). One can recognise an Integrase catalytic domain in the interval 660-835 (NSYEPFQYLH…AGLDISTLLP (176 aa)). Mg(2+) is bound by residues Asp-671 and Asp-736. Residues 956–1172 (SKAVSPTDST…LGGIGDSNAY (217 aa)) form a disordered region. The span at 960–969 (SPTDSTPPST) shows a compositional bias: low complexity. Polar residues-rich tracts occupy residues 1005 to 1015 (STPQISNIEST) and 1031 to 1043 (MSQS…SYAS). The span at 1044-1053 (KSKDFRHSDS) shows a compositional bias: basic and acidic residues. 2 stretches are compositionally biased toward polar residues: residues 1054-1082 (YSDN…QTSE) and 1095-1106 (SIDTSSSESNSL). The Bipartite nuclear localization signal signature appears at 1178-1212 (KKRSLEDNETEIKVSRDTWNTKNMRSLEPPRSKKR). A Reverse transcriptase Ty1/copia-type domain is found at 1338–1476 (NNYYITQLDI…DILGLEIKYQ (139 aa)). Mg(2+)-binding residues include Asp-1346, Asp-1427, Asp-1428, Asp-1610, Glu-1652, and Asp-1685. The 143-residue stretch at 1610 to 1752 (DASYGNQPYY…IKTFKLLTNK (143 aa)) folds into the RNase H Ty1/copia-type domain.

As to quaternary structure, the capsid protein forms a homotrimer, from which the VLPs are assembled. The protease is a homodimer, whose active site consists of two apposed aspartic acid residues. Post-translationally, initially, virus-like particles (VLPs) are composed of the structural unprocessed proteins Gag and Gag-Pol, and also contain the host initiator methionine tRNA (tRNA(i)-Met) which serves as a primer for minus-strand DNA synthesis, and a dimer of genomic Ty RNA. Processing of the polyproteins occurs within the particle and proceeds by an ordered pathway, called maturation. First, the protease (PR) is released by autocatalytic cleavage of the Gag-Pol polyprotein yielding capsid protein p45 and a Pol-p154 precursor protein. This cleavage is a prerequisite for subsequent processing of Pol-p154 at the remaining sites to release the mature structural and catalytic proteins. Maturation takes place prior to the RT reaction and is required to produce transposition-competent VLPs.

The protein resides in the cytoplasm. It is found in the nucleus. It catalyses the reaction DNA(n) + a 2'-deoxyribonucleoside 5'-triphosphate = DNA(n+1) + diphosphate. The enzyme catalyses Endonucleolytic cleavage to 5'-phosphomonoester.. Its function is as follows. Capsid protein (CA) is the structural component of the virus-like particle (VLP), forming the shell that encapsulates the retrotransposons dimeric RNA genome. The particles are assembled from trimer-clustered units and there are holes in the capsid shells that allow for the diffusion of macromolecules. CA also has nucleocapsid-like chaperone activity, promoting primer tRNA(i)-Met annealing to the multipartite primer-binding site (PBS), dimerization of Ty1 RNA and initiation of reverse transcription. The aspartyl protease (PR) mediates the proteolytic cleavages of the Gag and Gag-Pol polyproteins after assembly of the VLP. Functionally, reverse transcriptase/ribonuclease H (RT) is a multifunctional enzyme that catalyzes the conversion of the retro-elements RNA genome into dsDNA within the VLP. The enzyme displays a DNA polymerase activity that can copy either DNA or RNA templates, and a ribonuclease H (RNase H) activity that cleaves the RNA strand of RNA-DNA heteroduplexes during plus-strand synthesis and hydrolyzes RNA primers. The conversion leads to a linear dsDNA copy of the retrotransposon that includes long terminal repeats (LTRs) at both ends. In terms of biological role, integrase (IN) targets the VLP to the nucleus, where a subparticle preintegration complex (PIC) containing at least integrase and the newly synthesized dsDNA copy of the retrotransposon must transit the nuclear membrane. Once in the nucleus, integrase performs the integration of the dsDNA into the host genome. This Saccharomyces cerevisiae (strain ATCC 204508 / S288c) (Baker's yeast) protein is Transposon Ty1-GR3 Gag-Pol polyprotein (TY1B-GR3).